A 465-amino-acid chain; its full sequence is Argininosuccinate lyase (465 aa).

Belongs to the lyase 1 family. Argininosuccinate lyase subfamily.

Its subcellular location is the cytoplasm. It carries out the reaction 2-(N(omega)-L-arginino)succinate = fumarate + L-arginine. The protein operates within amino-acid biosynthesis; L-arginine biosynthesis; L-arginine from L-ornithine and carbamoyl phosphate: step 3/3. The protein is Argininosuccinate lyase of Deinococcus deserti (strain DSM 17065 / CIP 109153 / LMG 22923 / VCD115).